A 242-amino-acid polypeptide reads, in one-letter code: Ubiquinone biosynthesis O-methyltransferase (242 aa).

Residues arginine 44, glycine 64, aspartate 85, and methionine 129 each coordinate S-adenosyl-L-methionine.

The protein belongs to the methyltransferase superfamily. UbiG/COQ3 family.

The catalysed reaction is a 3-demethylubiquinol + S-adenosyl-L-methionine = a ubiquinol + S-adenosyl-L-homocysteine + H(+). It carries out the reaction a 3-(all-trans-polyprenyl)benzene-1,2-diol + S-adenosyl-L-methionine = a 2-methoxy-6-(all-trans-polyprenyl)phenol + S-adenosyl-L-homocysteine + H(+). It participates in cofactor biosynthesis; ubiquinone biosynthesis. In terms of biological role, O-methyltransferase that catalyzes the 2 O-methylation steps in the ubiquinone biosynthetic pathway. The sequence is that of Ubiquinone biosynthesis O-methyltransferase from Yersinia pseudotuberculosis serotype O:1b (strain IP 31758).